A 240-amino-acid chain; its full sequence is Uridylate cyclase (240 aa).

A Guanylate cyclase domain is found at 45–180 (TYLYADMANS…RAPNLAAKLS (136 aa)). Tyrosine 48 provides a ligand contact to a ribonucleoside 5'-triphosphate. Aspartate 50 and aspartate 94 together coordinate Mn(2+). Arginine 95 lines the a ribonucleoside 5'-triphosphate pocket.

The protein belongs to the adenylyl cyclase class-4/guanylyl cyclase family. Pyrimidine cyclase subfamily. Homodimer. Mn(2+) is required as a cofactor.

Its subcellular location is the cytoplasm. The enzyme catalyses UTP = 3',5'-cyclic UMP + diphosphate. Its function is as follows. Pycsar (pyrimidine cyclase system for antiphage resistance) provides immunity against bacteriophage. The pyrimidine cyclase (PycC) synthesizes cyclic nucleotides in response to infection; these serve as specific second messenger signals. The signals activate the adjacent effector, leading to bacterial cell death and abortive phage infection. A clade B Pycsar system. The pyrimidine cyclase gene of a two-gene Pycsar system, weakly generates cyclic UMP (cUMP) from UTP, has little to no activity on ATP, CTP or GTP. Expression of this and adjacent effector RsmPycTM (AC A0A1V0HUU2) probably confers resistance to bacteriophage. The genes are probably only expressed in response to bacteriophage infection. This is Uridylate cyclase from Rhodovulum sp. (strain MB263).